Consider the following 475-residue polypeptide: MSPQTETKASVGFKAGVKDYKLTYYTPEYETKDTDILAAFRVTPQPGVPPEEAGAAVAAESSTGTWTTVWTDGLTSLDRYKGRCYHIEPVAGEENQYICYVAYPLDLFEEGSVTNMFTSIEGNVFGFKALRALRLEDLRIPPAYVKTFQGPPHGIQVERDKLNKYGRPLLGCTIKPKLGLSAKNYGRAVYECLRGGLDFTKDDENVNSQPFMRWRDRFLFCAEAIYKAQAETGEXKGHYLNATAGTCEEMIKRAVFARELGVPIVMHDYLTGGFTANTSLAHYCRDNGLLLHIHRAMHAVIDRQKNHGIHFRVLAKALRMSGGDHIHSGTVVGKLEGERDITLGFVDLLRDDFIEKDRSRGIYFTQDWVSLPGVLPVASGGIHVWHMPALTEIFGDDSVLQFGGGTLGHPWGNAPGAVANRVALEACVQARNEGRDLAREGNEIIREACKWSPELAAACEVWKEIKFEFQAMDTL.

The propeptide occupies 1 to 2; sequence MS. Residue P3 is modified to N-acetylproline. N6,N6,N6-trimethyllysine is present on K14. Substrate-binding residues include N123 and T173. Residue K175 is the Proton acceptor of the active site. K177 provides a ligand contact to substrate. Residues K201, D203, and E204 each coordinate Mg(2+). An N6-carboxylysine modification is found at K201. H294 functions as the Proton acceptor in the catalytic mechanism. Residues R295, H327, and S379 each coordinate substrate.

This sequence belongs to the RuBisCO large chain family. Type I subfamily. Heterohexadecamer of 8 large chains and 8 small chains; disulfide-linked. The disulfide link is formed within the large subunit homodimers. The cofactor is Mg(2+). The disulfide bond which can form in the large chain dimeric partners within the hexadecamer appears to be associated with oxidative stress and protein turnover.

The protein localises to the plastid. Its subcellular location is the chloroplast. It carries out the reaction 2 (2R)-3-phosphoglycerate + 2 H(+) = D-ribulose 1,5-bisphosphate + CO2 + H2O. The enzyme catalyses D-ribulose 1,5-bisphosphate + O2 = 2-phosphoglycolate + (2R)-3-phosphoglycerate + 2 H(+). In terms of biological role, ruBisCO catalyzes two reactions: the carboxylation of D-ribulose 1,5-bisphosphate, the primary event in carbon dioxide fixation, as well as the oxidative fragmentation of the pentose substrate in the photorespiration process. Both reactions occur simultaneously and in competition at the same active site. This is Ribulose bisphosphate carboxylase large chain from Clarkia xantiana (Gunsight clarkia).